Reading from the N-terminus, the 950-residue chain is Protocadherin alpha-6 (950 aa).

An N-terminal signal peptide occupies residues 1–29 (MVFTPEDRLGKQCLLLPLLLLAAWKVGSG). Over 30–697 (QLHYSVPEEA…GPEAALVDVN (668 aa)) the chain is Extracellular. 6 consecutive Cadherin domains span residues 34–133 (SVPE…PPLF), 157–242 (ASDA…APTF), 243–350 (EQSE…VPEI), 351–455 (ALTS…APAF), 456–565 (AQPE…APAL), and 581–678 (VPRS…APKA). N-linked (GlcNAc...) asparagine glycans are attached at residues asparagine 257, asparagine 265, asparagine 386, and asparagine 548. Residues 698 to 718 (VYLIIAICAVSSLLVLTLLLY) form a helical membrane-spanning segment. At 719–950 (TALRCSAPPT…GNSTTDNSDQ (232 aa)) the chain is on the cytoplasmic side. PXXP repeat units follow at residues 799 to 802 (PRQP), 832 to 835 (PGGP), 873 to 876 (PGNP), and 891 to 894 (PGSP). Positions 799–894 (PRQPNPDWRY…PDKFIIPGSP (96 aa)) are 4 X 4 AA repeats of P-X-X-P. Positions 830–950 (AGPGGPDQQW…GNSTTDNSDQ (121 aa)) are disordered. Over residues 909-923 (DKSDFITFGKKEETK) the composition is skewed to basic and acidic residues.

The protein localises to the cell membrane. It is found in the secreted. Its function is as follows. Potential calcium-dependent cell-adhesion protein. May be involved in the establishment and maintenance of specific neuronal connections in the brain. The sequence is that of Protocadherin alpha-6 (PCDHA6) from Homo sapiens (Human).